The primary structure comprises 369 residues: UDP-N-acetylglucosamine--N-acetylmuramyl-(pentapeptide) pyrophosphoryl-undecaprenol N-acetylglucosamine transferase (369 aa).

Residues 10 to 12 (TGG), Asn-124, Arg-166, Ser-196, and Gln-300 each bind UDP-N-acetyl-alpha-D-glucosamine.

It belongs to the glycosyltransferase 28 family. MurG subfamily.

The protein resides in the cell membrane. It catalyses the reaction di-trans,octa-cis-undecaprenyl diphospho-N-acetyl-alpha-D-muramoyl-L-alanyl-D-glutamyl-meso-2,6-diaminopimeloyl-D-alanyl-D-alanine + UDP-N-acetyl-alpha-D-glucosamine = di-trans,octa-cis-undecaprenyl diphospho-[N-acetyl-alpha-D-glucosaminyl-(1-&gt;4)]-N-acetyl-alpha-D-muramoyl-L-alanyl-D-glutamyl-meso-2,6-diaminopimeloyl-D-alanyl-D-alanine + UDP + H(+). It participates in cell wall biogenesis; peptidoglycan biosynthesis. Functionally, cell wall formation. Catalyzes the transfer of a GlcNAc subunit on undecaprenyl-pyrophosphoryl-MurNAc-pentapeptide (lipid intermediate I) to form undecaprenyl-pyrophosphoryl-MurNAc-(pentapeptide)GlcNAc (lipid intermediate II). This chain is UDP-N-acetylglucosamine--N-acetylmuramyl-(pentapeptide) pyrophosphoryl-undecaprenol N-acetylglucosamine transferase, found in Desulfitobacterium hafniense (strain Y51).